We begin with the raw amino-acid sequence, 516 residues long: Cilia- and flagella-associated protein 53 (516 aa).

2 coiled-coil regions span residues 217 to 283 and 316 to 440; these read EEKK…LQVK and MQGY…RQMK. Composition is skewed to basic and acidic residues over residues 417 to 436 and 461 to 472; these read KELLESATEEHKQLETDRNA and QAEREEEQREFE. Disordered stretches follow at residues 417 to 443 and 455 to 475; these read KELLESATEEHKQLETDRNARQMKVAQ and YQQSQRQAEREEEQREFEAGL.

The protein belongs to the CFAP53 family.

Its subcellular location is the cytoplasm. The protein localises to the cytoskeleton. The protein resides in the cilium axoneme. It is found in the microtubule organizing center. It localises to the centrosome. Its subcellular location is the centriolar satellite. Functionally, microtubule inner protein (MIP) part of the dynein-decorated doublet microtubules (DMTs) in cilia axoneme, which is required for motile cilia beating. Regulates motility patterns of both 9+0 and 9+2 motile cilia through differential localization and recruitment of axonemal dynein components. Required for motile cilium formation and movement. Involved in the establishment of left-right symmetry during embryogenesis. The polypeptide is Cilia- and flagella-associated protein 53 (Xenopus laevis (African clawed frog)).